Consider the following 131-residue polypeptide: uncharacterized protein (131 aa).

The disordered stretch occupies residues 60 to 100; sequence GRHTLSQVPNKGHEKASAVQLPEKQGTDQSRRGPTSAVTKA. Polar residues predominate over residues 91–100; that stretch reads RGPTSAVTKA.

This is an uncharacterized protein from Homo sapiens (Human).